The following is a 1020-amino-acid chain: Probable leucine-rich repeat receptor-like serine/threonine-protein kinase At3g14840 (1020 aa).

An N-terminal signal peptide occupies residues 1 to 26 (MSLNRQLLFTYYFIVSLILFSDFVSS). Over 27 to 614 (ATLPKEEVDA…GTGGGSSVGT (588 aa)) the chain is Extracellular. Residues N50 and N81 are each glycosylated (N-linked (GlcNAc...) asparagine). LRR repeat units follow at residues 86–110 (ICHV…LSGL), 111–134 (PFLQ…WGAS), 136–157 (LLNI…LGNL), 158–181 (TTLS…LGNL), 182–204 (PNLK…TFAK), 206–231 (TTLT…NWKG), 253–276 (LGTL…PLRN), 277–301 (MTSM…LGQN), 302–324 (RKLK…TYSG), and 326–349 (SDVD…MVDQ). N124, N138, and N156 each carry an N-linked (GlcNAc...) asparagine glycan. N193 carries an N-linked (GlcNAc...) asparagine glycan. Residues N276 and N289 are each glycosylated (N-linked (GlcNAc...) asparagine). N-linked (GlcNAc...) asparagine glycosylation is found at N359, N386, N389, N417, N461, N469, and N498. One copy of the LRR 11 repeat lies at 479-501 (QARLSAISLTYQALCLGKGNYTV). Residues 615–635 (VVGSVIASTVFLVLLIGGILW) traverse the membrane as a helical segment. Residues 636–1020 (WRGCLRPKSQ…LDSAYWNTRT (385 aa)) are Cytoplasmic-facing. The 278-residue stretch at 672–949 (FDPANKIGEG…VSMLEGHSTV (278 aa)) folds into the Protein kinase domain. Residues 678-686 (IGEGGFGPV) and K700 contribute to the ATP site. Y745 carries the post-translational modification Phosphotyrosine. D798 acts as the Proton acceptor in catalysis. Residue S831 is modified to Phosphoserine. 2 positions are modified to phosphothreonine: T832 and T837. Position 845 is a phosphotyrosine (Y845).

The protein belongs to the protein kinase superfamily. Ser/Thr protein kinase family.

Its subcellular location is the cell membrane. It carries out the reaction L-seryl-[protein] + ATP = O-phospho-L-seryl-[protein] + ADP + H(+). It catalyses the reaction L-threonyl-[protein] + ATP = O-phospho-L-threonyl-[protein] + ADP + H(+). This chain is Probable leucine-rich repeat receptor-like serine/threonine-protein kinase At3g14840 (LRR-RLK), found in Arabidopsis thaliana (Mouse-ear cress).